The chain runs to 178 residues: Large ribosomal subunit protein bL25 (178 aa).

This sequence belongs to the bacterial ribosomal protein bL25 family. CTC subfamily. In terms of assembly, part of the 50S ribosomal subunit; part of the 5S rRNA/L5/L18/L25 subcomplex. Contacts the 5S rRNA. Binds to the 5S rRNA independently of L5 and L18.

Its function is as follows. This is one of the proteins that binds to the 5S RNA in the ribosome where it forms part of the central protuberance. In Helicobacter pylori (strain ATCC 700392 / 26695) (Campylobacter pylori), this protein is Large ribosomal subunit protein bL25.